The primary structure comprises 308 residues: D-alanine--D-alanine ligase (308 aa).

The region spanning 102 to 302 (KKVAAAAGVA…FGELLSWMVE (201 aa)) is the ATP-grasp domain. Residue 128 to 183 (PMEPPYVVKPVREGSSFGVVIVKEDQTHPPQIISSAEWNYGAEVLVEKYIPGRELT) participates in ATP binding. Residues D252, E269, and N271 each coordinate Mg(2+).

The protein belongs to the D-alanine--D-alanine ligase family. The cofactor is Mg(2+). Requires Mn(2+) as cofactor.

The protein localises to the cytoplasm. The catalysed reaction is 2 D-alanine + ATP = D-alanyl-D-alanine + ADP + phosphate + H(+). It functions in the pathway cell wall biogenesis; peptidoglycan biosynthesis. Cell wall formation. This Brucella anthropi (strain ATCC 49188 / DSM 6882 / CCUG 24695 / JCM 21032 / LMG 3331 / NBRC 15819 / NCTC 12168 / Alc 37) (Ochrobactrum anthropi) protein is D-alanine--D-alanine ligase.